Consider the following 204-residue polypeptide: Probable UbiX-like flavin prenyltransferase (204 aa).

FMN-binding positions include 21–23, S47, 98–101, and R133; these read GAT and SMKS.

The protein belongs to the UbiX/PAD1 family. YclB subfamily. In terms of assembly, homododecamer.

The enzyme catalyses dimethylallyl phosphate + FMNH2 = prenylated FMNH2 + phosphate. Involved in the non-oxidative decarboxylation and detoxification of phenolic derivatives under both aerobic and anaerobic conditions. Flavin prenyltransferase that catalyzes the synthesis of the prenylated FMN cofactor (prenyl-FMN) for phenolic acid decarboxylase. The sequence is that of Probable UbiX-like flavin prenyltransferase from Bacillus subtilis (strain 168).